Reading from the N-terminus, the 41-residue chain is Protein UL21 homolog (41 aa).

This sequence belongs to the herpesviridae UL21 family.

The polypeptide is Protein UL21 homolog (Equine herpesvirus 4 (strain 1942) (EHV-4)).